The primary structure comprises 951 residues: Protein translocase subunit SecA 1 (951 aa).

Residues Gln87, 105 to 109, and Asp525 contribute to the ATP site; that span reads GEGKT. The tract at residues 911 to 942 is disordered; it reads PVVSADRSSRDPGNPASWGKVGRNEDCPCGSG. Zn(2+) contacts are provided by Cys937, Cys939, Cys948, and His949.

The protein belongs to the SecA family. As to quaternary structure, monomer and homodimer. Part of the essential Sec protein translocation apparatus which comprises SecA, SecYEG and auxiliary proteins SecDF-YajC and YidC. Zn(2+) serves as cofactor.

The protein localises to the cell inner membrane. Its subcellular location is the cytoplasm. It carries out the reaction ATP + H2O + cellular proteinSide 1 = ADP + phosphate + cellular proteinSide 2.. Part of the Sec protein translocase complex. Interacts with the SecYEG preprotein conducting channel. Has a central role in coupling the hydrolysis of ATP to the transfer of proteins into and across the cell membrane, serving both as a receptor for the preprotein-SecB complex and as an ATP-driven molecular motor driving the stepwise translocation of polypeptide chains across the membrane. The chain is Protein translocase subunit SecA 1 from Nitrobacter hamburgensis (strain DSM 10229 / NCIMB 13809 / X14).